A 696-amino-acid polypeptide reads, in one-letter code: MSKQQYRLGIDAGGTFTDFILADHQGNVQLFKAPSTPHDGTLAIRNGLAQIADALGRTPAEIIADCDLCINGTTVALNALIEKTGVKVGLLCTDGHEDSLEIRLGHKEDGHRYDATYPPAHMLVPRHLRRPIGGRIISDGSEFSPLDEAAIHAAIDYFREQQVQAVAISFVWSVRNPSHEQRAMAMVRAALPDVFVCSGHEVFPQIREYTRTSTTVVNAYLSPVMGRYIERIDALFEELGAQQPTRYFQSNGGLAPGVVMRERAVNAINSGPASAPQAGLCVAQPFGIDNVITVDMGGTSFDITLSKGGRTNFSKDSDFLRYRIGVPMIQVETLGAGGGSIAHLDDFGMLQVGPRSAGANPGPVCYGKGGVEPTVTDANLALGYLADGALLGGSIRLNRQAAIDAIRSKIAEPLGISVERAAVGIITLVNLSMVSGIRRVSIERGYDPRDFALIGAGGAAGMHVMRLAEEIGSKVVLIPKVASGLCAFGQILSDIRYDQLTTLPMRLDDEFVDLEQLNQALQQLRERGMTNLRDDGFGGDNRIECQYSLEIRYLGQIHECSVELSCDRLDRSSLAALRESFHQRHKALFSYSEPNSPVELVNLECSVIARLQRPPMPELATPLKATAAIPAGHRPMLFNAQDDWQDTPVYNGDRIEVGQIIQGPCVIEEATTNILVPPGWRVSLDPSATYELTPGH.

This sequence belongs to the HyuA family. In terms of assembly, the caprolactamase is a heterotetramer composed of two alpha subunits (CapA) and two beta subunits (CapB).

Its activity is regulated as follows. Activity is dependent on the presence of ATP and bicarbonate. The requirement for bicarbonate may be related to allosteric activation through conformational effects, but it is also conceivable that carboxyphosphate is formed and acts as a mediator in caprolactam activation, forming carboxy- or phospholactim. In terms of biological role, component of a caprolactamase involved in the degradation of caprolactam, an industrial compound mainly used in the production of Nylon 6. Catalyzes the ATP-dependent hydrolysis of the caprolactam ring to form 6-aminocaproic acid (6-ACA). The alpha subunit is responsible for ATP-dependent substrate phosphorylation. The enzyme cannot use 5-oxoproline. This Pseudomonas jessenii protein is Caprolactamase subunit alpha.